The chain runs to 307 residues: Aspartate carbamoyltransferase catalytic subunit (307 aa).

The carbamoyl phosphate site is built by arginine 51 and threonine 52. Lysine 80 contacts L-aspartate. Positions 101, 129, and 132 each coordinate carbamoyl phosphate. The L-aspartate site is built by arginine 162 and arginine 225. Carbamoyl phosphate is bound by residues leucine 264 and proline 265.

The protein belongs to the aspartate/ornithine carbamoyltransferase superfamily. ATCase family. Heterododecamer (2C3:3R2) of six catalytic PyrB chains organized as two trimers (C3), and six regulatory PyrI chains organized as three dimers (R2).

It carries out the reaction carbamoyl phosphate + L-aspartate = N-carbamoyl-L-aspartate + phosphate + H(+). It participates in pyrimidine metabolism; UMP biosynthesis via de novo pathway; (S)-dihydroorotate from bicarbonate: step 2/3. Its function is as follows. Catalyzes the condensation of carbamoyl phosphate and aspartate to form carbamoyl aspartate and inorganic phosphate, the committed step in the de novo pyrimidine nucleotide biosynthesis pathway. In Lachnoclostridium phytofermentans (strain ATCC 700394 / DSM 18823 / ISDg) (Clostridium phytofermentans), this protein is Aspartate carbamoyltransferase catalytic subunit.